Here is a 558-residue protein sequence, read N- to C-terminus: Oligo-1,6-glucosidase (558 aa).

Asp-21, Asn-23, Asp-25, and Asp-29 together coordinate Ca(2+). Asp-199 functions as the Nucleophile in the catalytic mechanism. The active-site Proton donor is the Glu-255.

The protein belongs to the glycosyl hydrolase 13 family.

The protein localises to the cytoplasm. It catalyses the reaction Hydrolysis of (1-&gt;6)-alpha-D-glucosidic linkages in some oligosaccharides produced from starch and glycogen by alpha-amylase, and in isomaltose.. This Bacillus cereus protein is Oligo-1,6-glucosidase (malL).